The following is a 235-amino-acid chain: Small ribosomal subunit protein uS2 (235 aa).

It belongs to the universal ribosomal protein uS2 family.

The polypeptide is Small ribosomal subunit protein uS2 (Synechococcus sp. (strain RCC307)).